Consider the following 261-residue polypeptide: Undecaprenyl-diphosphatase (261 aa).

A run of 6 helical transmembrane segments spans residues 39–59, 76–96, 99–119, 173–193, 206–226, and 238–258; these read NVLL…LIIF, LLII…KDFF, LFVS…ILWL, AAKF…VLDL, IDLM…YFAV, and LTWF…LQAA.

This sequence belongs to the UppP family.

The protein resides in the cell membrane. It catalyses the reaction di-trans,octa-cis-undecaprenyl diphosphate + H2O = di-trans,octa-cis-undecaprenyl phosphate + phosphate + H(+). Its function is as follows. Catalyzes the dephosphorylation of undecaprenyl diphosphate (UPP). Confers resistance to bacitracin. The chain is Undecaprenyl-diphosphatase from Carboxydothermus hydrogenoformans (strain ATCC BAA-161 / DSM 6008 / Z-2901).